The sequence spans 414 residues: Translation initiation factor 2 subunit gamma (414 aa).

A tr-type G domain is found at 7 to 204 (QPEVNIGLVG…ALQTEIATPD (198 aa)). A G1 region spans residues 16–23 (GHVDHGKT). Positions 19, 23, 44, and 46 each coordinate Mg(2+). 19 to 24 (DHGKTT) contacts GTP. The tract at residues 44–48 (GISIR) is G2. A G3 region spans residues 91–94 (DAPG). GTP contacts are provided by residues 147–150 (NKVD) and 182–184 (SAE). Residues 147–150 (NKVD) form a G4 region. The interval 182 to 184 (SAE) is G5.

The protein belongs to the TRAFAC class translation factor GTPase superfamily. Classic translation factor GTPase family. EIF2G subfamily. As to quaternary structure, heterotrimer composed of an alpha, a beta and a gamma chain. The cofactor is Mg(2+).

It carries out the reaction GTP + H2O = GDP + phosphate + H(+). Its function is as follows. eIF-2 functions in the early steps of protein synthesis by forming a ternary complex with GTP and initiator tRNA. This Halobacterium salinarum (strain ATCC 29341 / DSM 671 / R1) protein is Translation initiation factor 2 subunit gamma.